Here is a 458-residue protein sequence, read N- to C-terminus: Bifunctional protein GlmU (458 aa).

The interval 1–230 (MLQIDVVILA…DWEVVGVNDK (230 aa)) is pyrophosphorylase. UDP-N-acetyl-alpha-D-glucosamine is bound by residues 9–12 (LAAG), Lys-23, Gln-75, and 80–81 (GT). Position 104 (Asp-104) interacts with Mg(2+). The UDP-N-acetyl-alpha-D-glucosamine site is built by Gly-139, Glu-155, Asn-170, and Asn-228. Asn-228 contributes to the Mg(2+) binding site. Positions 231–251 (IQLSTLERAHQQDVAKGLMEQ) are linker. The tract at residues 252–458 (GVMFADPARF…NWKRPKKNKD (207 aa)) is N-acetyltransferase. Positions 334 and 352 each coordinate UDP-N-acetyl-alpha-D-glucosamine. His-364 functions as the Proton acceptor in the catalytic mechanism. Residues Tyr-367 and Asn-378 each contribute to the UDP-N-acetyl-alpha-D-glucosamine site. Residues Ala-381, 387-388 (NY), Ser-406, Ala-424, and Arg-441 each bind acetyl-CoA.

The protein in the N-terminal section; belongs to the N-acetylglucosamine-1-phosphate uridyltransferase family. It in the C-terminal section; belongs to the transferase hexapeptide repeat family. Homotrimer. It depends on Mg(2+) as a cofactor.

It is found in the cytoplasm. The enzyme catalyses alpha-D-glucosamine 1-phosphate + acetyl-CoA = N-acetyl-alpha-D-glucosamine 1-phosphate + CoA + H(+). It catalyses the reaction N-acetyl-alpha-D-glucosamine 1-phosphate + UTP + H(+) = UDP-N-acetyl-alpha-D-glucosamine + diphosphate. The protein operates within nucleotide-sugar biosynthesis; UDP-N-acetyl-alpha-D-glucosamine biosynthesis; N-acetyl-alpha-D-glucosamine 1-phosphate from alpha-D-glucosamine 6-phosphate (route II): step 2/2. It functions in the pathway nucleotide-sugar biosynthesis; UDP-N-acetyl-alpha-D-glucosamine biosynthesis; UDP-N-acetyl-alpha-D-glucosamine from N-acetyl-alpha-D-glucosamine 1-phosphate: step 1/1. It participates in bacterial outer membrane biogenesis; LPS lipid A biosynthesis. Functionally, catalyzes the last two sequential reactions in the de novo biosynthetic pathway for UDP-N-acetylglucosamine (UDP-GlcNAc). The C-terminal domain catalyzes the transfer of acetyl group from acetyl coenzyme A to glucosamine-1-phosphate (GlcN-1-P) to produce N-acetylglucosamine-1-phosphate (GlcNAc-1-P), which is converted into UDP-GlcNAc by the transfer of uridine 5-monophosphate (from uridine 5-triphosphate), a reaction catalyzed by the N-terminal domain. The protein is Bifunctional protein GlmU of Nitrosomonas eutropha (strain DSM 101675 / C91 / Nm57).